The sequence spans 427 residues: UDP-N-acetylglucosamine--N-acetylmuramyl-(pentapeptide) pyrophosphoryl-undecaprenol N-acetylglucosamine transferase (427 aa).

Residues 29 to 31 (TGG), asparagine 141, arginine 177, serine 205, isoleucine 258, and glutamine 303 each bind UDP-N-acetyl-alpha-D-glucosamine. The tract at residues 408 to 427 (SLHPIPDSRFPIRTSAGGAQ) is disordered.

Belongs to the glycosyltransferase 28 family. MurG subfamily.

It is found in the cell inner membrane. It catalyses the reaction di-trans,octa-cis-undecaprenyl diphospho-N-acetyl-alpha-D-muramoyl-L-alanyl-D-glutamyl-meso-2,6-diaminopimeloyl-D-alanyl-D-alanine + UDP-N-acetyl-alpha-D-glucosamine = di-trans,octa-cis-undecaprenyl diphospho-[N-acetyl-alpha-D-glucosaminyl-(1-&gt;4)]-N-acetyl-alpha-D-muramoyl-L-alanyl-D-glutamyl-meso-2,6-diaminopimeloyl-D-alanyl-D-alanine + UDP + H(+). The protein operates within cell wall biogenesis; peptidoglycan biosynthesis. Cell wall formation. Catalyzes the transfer of a GlcNAc subunit on undecaprenyl-pyrophosphoryl-MurNAc-pentapeptide (lipid intermediate I) to form undecaprenyl-pyrophosphoryl-MurNAc-(pentapeptide)GlcNAc (lipid intermediate II). The polypeptide is UDP-N-acetylglucosamine--N-acetylmuramyl-(pentapeptide) pyrophosphoryl-undecaprenol N-acetylglucosamine transferase (Xanthomonas campestris pv. campestris (strain 8004)).